Reading from the N-terminus, the 118-residue chain is Ribonuclease P protein component (118 aa).

This sequence belongs to the RnpA family. In terms of assembly, consists of a catalytic RNA component (M1 or rnpB) and a protein subunit.

The enzyme catalyses Endonucleolytic cleavage of RNA, removing 5'-extranucleotides from tRNA precursor.. RNaseP catalyzes the removal of the 5'-leader sequence from pre-tRNA to produce the mature 5'-terminus. It can also cleave other RNA substrates such as 4.5S RNA. The protein component plays an auxiliary but essential role in vivo by binding to the 5'-leader sequence and broadening the substrate specificity of the ribozyme. The chain is Ribonuclease P protein component from Rickettsia canadensis (strain McKiel).